Here is a 194-residue protein sequence, read N- to C-terminus: Small ribosomal subunit protein uS4c (194 aa).

The region spanning 82-143 (MRLDNILFRL…KERSKVLIQN (62 aa)) is the S4 RNA-binding domain.

The protein belongs to the universal ribosomal protein uS4 family. In terms of assembly, part of the 30S ribosomal subunit. Contacts protein S5. The interaction surface between S4 and S5 is involved in control of translational fidelity.

The protein resides in the plastid. Its subcellular location is the chloroplast. In terms of biological role, one of the primary rRNA binding proteins, it binds directly to 16S rRNA where it nucleates assembly of the body of the 30S subunit. Its function is as follows. With S5 and S12 plays an important role in translational accuracy. This chain is Small ribosomal subunit protein uS4c (rps4), found in Cypella sp. (strain Porto Alegre 027).